Here is a 687-residue protein sequence, read N- to C-terminus: Putative secreted metallopeptidase (687 aa).

The first 22 residues, 1–22 (MLFTSTAVAALSGALLIQPALA), serve as a signal peptide directing secretion. N-linked (GlcNAc...) asparagine glycosylation is found at Asn-54, Asn-114, Asn-252, Asn-256, and Asn-379.

This sequence belongs to the peptidase M10B family.

The protein localises to the secreted. This chain is Putative secreted metallopeptidase, found in Arthroderma benhamiae (strain ATCC MYA-4681 / CBS 112371) (Trichophyton mentagrophytes).